Consider the following 297-residue polypeptide: MQKEKIVVLYGGDSPEREVSLKSGKAVLDSLLNQGYDAVGLDASSKDLVVKLLELNPDKCFIALHGEDGENGRVAALLELLGIKHTGSTMKSCVVTMDKMISKEILMHHRMPTPMAKFLTDRLVEADEISFPVAVKPSSGGSSIATFKVKSLEELENAYQQASKHGEVMIEQWVTGKEITVAIVNNDVYSSVWIEPLNEFYDYESKYSGKSIYHAPSGLCEQKELEVRQLAKKAYDLLGCKGHARVDFIYDDKGDFYIMEINSSPGMTENSLSPKSAAAEGIDFDSFVKSILEQAQC.

An ATP-grasp domain is found at 103–293; the sequence is KEILMHHRMP…FDSFVKSILE (191 aa). ATP is bound at residue 129 to 180; that stretch reads ISFPVAVKPSSGGSSIATFKVKSLEELENAYQQASKHGEVMIEQWVTGKEIT. Residues aspartate 247, glutamate 260, and asparagine 262 each coordinate Mg(2+).

Belongs to the D-alanine--D-alanine ligase family. Mg(2+) is required as a cofactor. Requires Mn(2+) as cofactor.

It localises to the cytoplasm. The catalysed reaction is 2 D-alanine + ATP = D-alanyl-D-alanine + ADP + phosphate + H(+). It functions in the pathway cell wall biogenesis; peptidoglycan biosynthesis. Cell wall formation. This chain is D-alanine--D-alanine ligase, found in Francisella philomiragia subsp. philomiragia (strain ATCC 25017 / CCUG 19701 / FSC 153 / O#319-036).